Here is a 113-residue protein sequence, read N- to C-terminus: Nucleoid-associated protein CLJ_B0037 (113 aa).

A compositionally biased stretch (basic and acidic residues) spans 93–102; sequence EEDTSSEVKR. The segment at 93–113 is disordered; that stretch reads EEDTSSEVKRLTGGMNLPGMF.

The protein belongs to the YbaB/EbfC family. Homodimer.

It is found in the cytoplasm. The protein resides in the nucleoid. Its function is as follows. Binds to DNA and alters its conformation. May be involved in regulation of gene expression, nucleoid organization and DNA protection. The polypeptide is Nucleoid-associated protein CLJ_B0037 (Clostridium botulinum (strain 657 / Type Ba4)).